Consider the following 474-residue polypeptide: tRNA-2-methylthio-N(6)-dimethylallyladenosine synthase (474 aa).

Residues 3–120 (KKLHIKTWGC…LPEMINSVRG (118 aa)) form the MTTase N-terminal domain. [4Fe-4S] cluster is bound by residues C12, C49, C83, C157, C161, and C164. A Radical SAM core domain is found at 143–375 (RAEGPTAFVS…QERINQQAMA (233 aa)). The region spanning 378–441 (RRMLGTTQRI…PNSLRGKVVR (64 aa)) is the TRAM domain.

This sequence belongs to the methylthiotransferase family. MiaB subfamily. In terms of assembly, monomer. The cofactor is [4Fe-4S] cluster.

It localises to the cytoplasm. It catalyses the reaction N(6)-dimethylallyladenosine(37) in tRNA + (sulfur carrier)-SH + AH2 + 2 S-adenosyl-L-methionine = 2-methylsulfanyl-N(6)-dimethylallyladenosine(37) in tRNA + (sulfur carrier)-H + 5'-deoxyadenosine + L-methionine + A + S-adenosyl-L-homocysteine + 2 H(+). Its function is as follows. Catalyzes the methylthiolation of N6-(dimethylallyl)adenosine (i(6)A), leading to the formation of 2-methylthio-N6-(dimethylallyl)adenosine (ms(2)i(6)A) at position 37 in tRNAs that read codons beginning with uridine. The sequence is that of tRNA-2-methylthio-N(6)-dimethylallyladenosine synthase from Escherichia coli O81 (strain ED1a).